Consider the following 214-residue polypeptide: Transcription factor MYB24 (214 aa).

HTH myb-type domains lie at 14-66 and 67-121; these read DAEV…LNYL and RPDV…QKYI. 2 consecutive DNA-binding regions (H-T-H motif) follow at residues 42–66 and 94–117; these read WNSL…LNYL and WSKI…RTKI.

In terms of assembly, interacts (via N-terminus) with TIFY10A/JAZ1, TIFY5A/JAZ8 AND TIFY3A/JAZ11. In terms of tissue distribution, expressed specifically in flowers. Expressed in all four whorls of the flower and in the vascular tissue of stamen filament and sepals. Detected in male and female gametophytes, especially in microspores and ovules. Weakly expressed in petals and the upper part of pistils.

Its subcellular location is the nucleus. Transcription factor acting redundantly with MYB21 and MYB57 to control stamen filament elongation in the late developed flowers. Contributes with MYB21 to induction of MYB108 by jasmonate. Repressed at the transcript levels by DELLA proteins. This Arabidopsis thaliana (Mouse-ear cress) protein is Transcription factor MYB24 (MYB24).